A 326-amino-acid polypeptide reads, in one-letter code: Tetraacyldisaccharide 4'-kinase (326 aa).

Residue 55 to 62 (TAGGNGKT) coordinates ATP.

Belongs to the LpxK family.

The enzyme catalyses a lipid A disaccharide + ATP = a lipid IVA + ADP + H(+). It functions in the pathway glycolipid biosynthesis; lipid IV(A) biosynthesis; lipid IV(A) from (3R)-3-hydroxytetradecanoyl-[acyl-carrier-protein] and UDP-N-acetyl-alpha-D-glucosamine: step 6/6. In terms of biological role, transfers the gamma-phosphate of ATP to the 4'-position of a tetraacyldisaccharide 1-phosphate intermediate (termed DS-1-P) to form tetraacyldisaccharide 1,4'-bis-phosphate (lipid IVA). The polypeptide is Tetraacyldisaccharide 4'-kinase (Serratia proteamaculans (strain 568)).